Here is a 575-residue protein sequence, read N- to C-terminus: FAD-dependent monooxygenase rstn6 (575 aa).

An N-terminal signal peptide occupies residues 1–17 (MYDVIVIGAGWCGLVAA). Ile106 is a binding site for FAD. Residues Asn239 and Asn295 are each glycosylated (N-linked (GlcNAc...) asparagine).

Belongs to the FAD-binding monooxygenase family. The cofactor is FAD.

The protein operates within antifungal biosynthesis. In terms of biological role, FAD-dependent monooxygenase; part of the gene cluster that mediates the biosynthesis of the tetrahydropyranyl antifungal agent restricticin that acts as an inhibitor of CYP51 and blocks the ergosterol biosynthesis. The highly reducing polyketide synthase rstn3, the short chain dehydrogenase rstn4, the cyclase rstn5, the FAD-dependent monooxygenase rstn6 and the enoylreductase rstn7 are required to generate the first stable intermediate desmethylrestrictinol. Rstn3 with rstn7 biosynthesize the first polyketide chain intermediate that is reduced by rstn4, followed by epoxidation by rstn6 before 6-endo cyclization via epoxide opening by rstn5 leads to desmethylrestrictinol. The methyltransferase rstn1 then catalyzes the C4 O-methylation of desmethylrestrictinol to produce restrictinol, and the nonribosomal peptide synthetase rstn8 catalyzes the C3 esterification of restrictinol with glycine that leads to restricticin. The polypeptide is FAD-dependent monooxygenase rstn6 (Aspergillus nomiae NRRL (strain ATCC 15546 / NRRL 13137 / CBS 260.88 / M93)).